A 191-amino-acid polypeptide reads, in one-letter code: Holliday junction branch migration complex subunit RuvA (191 aa).

The segment at 1-64 (MIGSITGNVE…DNITQLYGFL (64 aa)) is domain I. The segment at 65–142 (NRQEQDYFKM…KMPIEETFSI (78 aa)) is domain II. Residues 143 to 146 (IEND) are flexible linker. The segment at 146–191 (DDSLAALISLGYEKLKAFNVIQEIKSKTPDASTQEVIRKALQKLSQ) is domain III.

The protein belongs to the RuvA family. Homotetramer. Forms an RuvA(8)-RuvB(12)-Holliday junction (HJ) complex. HJ DNA is sandwiched between 2 RuvA tetramers; dsDNA enters through RuvA and exits via RuvB. An RuvB hexamer assembles on each DNA strand where it exits the tetramer. Each RuvB hexamer is contacted by two RuvA subunits (via domain III) on 2 adjacent RuvB subunits; this complex drives branch migration. In the full resolvosome a probable DNA-RuvA(4)-RuvB(12)-RuvC(2) complex forms which resolves the HJ.

It localises to the cytoplasm. In terms of biological role, the RuvA-RuvB-RuvC complex processes Holliday junction (HJ) DNA during genetic recombination and DNA repair, while the RuvA-RuvB complex plays an important role in the rescue of blocked DNA replication forks via replication fork reversal (RFR). RuvA specifically binds to HJ cruciform DNA, conferring on it an open structure. The RuvB hexamer acts as an ATP-dependent pump, pulling dsDNA into and through the RuvAB complex. HJ branch migration allows RuvC to scan DNA until it finds its consensus sequence, where it cleaves and resolves the cruciform DNA. This Ehrlichia ruminantium (strain Gardel) protein is Holliday junction branch migration complex subunit RuvA.